The following is a 269-amino-acid chain: Regulatory protein RecX (269 aa).

The protein belongs to the RecX family.

It is found in the cytoplasm. In terms of biological role, modulates RecA activity. The protein is Regulatory protein RecX of Listeria welshimeri serovar 6b (strain ATCC 35897 / DSM 20650 / CCUG 15529 / CIP 8149 / NCTC 11857 / SLCC 5334 / V8).